A 185-amino-acid polypeptide reads, in one-letter code: Elongation factor P (185 aa).

This sequence belongs to the elongation factor P family.

The protein localises to the cytoplasm. It participates in protein biosynthesis; polypeptide chain elongation. Involved in peptide bond synthesis. Stimulates efficient translation and peptide-bond synthesis on native or reconstituted 70S ribosomes in vitro. Probably functions indirectly by altering the affinity of the ribosome for aminoacyl-tRNA, thus increasing their reactivity as acceptors for peptidyl transferase. The sequence is that of Elongation factor P from Fervidobacterium nodosum (strain ATCC 35602 / DSM 5306 / Rt17-B1).